A 537-amino-acid chain; its full sequence is Pancreatic secretory granule membrane major glycoprotein GP2 (537 aa).

Residues 1–28 form the signal peptide; it reads MPHLMERMVGSGLLWLALVSCILTQASA. The interval 41–60 is beta hairpin; it reads SYGLDLDCGAPGTPEAHVCF. 11 disulfides stabilise this stretch: C48–C59, C63–C157, C85–C172, C107–C145, C113–C177, C138–C146, C190–C200, C194–C209, C211–C241, C229–C320, and C261–C284. Residues 61–81 form a D10C region; it reads DPCQNYTLLDEPFRSTENSAG. The N-linked (GlcNAc...) (high mannose) asparagine glycan is linked to N65. N-linked (GlcNAc...) asparagine glycans are attached at residues N88, N122, and N134. An EGF-like domain is found at 186 to 230; the sequence is VEDKCEKACRPEEECLALNSTWGCFCRQDLNSSDVHSLQPQLDCG. N-linked (GlcNAc...) asparagine glycans are attached at residues N204, N216, and N260. The interval 228–321 is ZP-N; it reads DCGPREIKVK…TILNINFQCA (94 aa). The 257-residue stretch at 228–484 folds into the ZP domain; sequence DCGPREIKVK…PSCSRSQVRS (257 aa). N-linked (GlcNAc...) asparagine glycans are attached at residues N291 and N342. Residues 322 to 345 form a flexible ZP-N/ZP-C linker region; the sequence is YPLDMKVSLQAALQPIVSSLNVSV. The segment at 346 to 357 is internal hydrophobic patch (IHP); that stretch reads DGNGEFIVRMAL. Residues 346 to 484 are ZP-C; sequence DGNGEFIVRM…PSCSRSQVRS (139 aa). N362 carries an N-linked (GlcNAc...) asparagine glycan. 3 cysteine pairs are disulfide-bonded: C401–C461, C422–C477, and C466–C473. The segment at 491-499 is external hydrophobic patch (EHP); that stretch reads LARVLDLGP. The GPI-anchor amidated asparagine moiety is linked to residue N512. Positions 513–537 are cleaved as a propeptide — removed in mature form; the sequence is GTPSTAGFLVAWPMVLLTVLLAWLF.

As to quaternary structure, interacts with SYCN. Interacts with bacterial adhesin fimH. N-glycosylated. Glycosylated Asn-65 may be required for interaction with bacterial adhesin fimH. In terms of tissue distribution, expressed in pancreas (at protein level). Specifically expressed by M (microfold) cells which are atypical epithelial cells of the intestine (at protein level).

Its subcellular location is the zymogen granule membrane. The protein resides in the secreted. It localises to the cell membrane. It is found in the apical cell membrane. The protein localises to the membrane raft. Its subcellular location is the endosome. Functionally, functions as an intestinal M-cell transcytotic receptor specific for type-I-piliated bacteria that participates in the mucosal immune response toward these bacteria. At the apical membrane of M-cells it binds fimH, a protein of the bacteria type I pilus tip. Internalizes bound bacteria, like E.coli and S.typhimurium, from the lumen of the intestine and delivers them, through M-cells, to the underlying organized lymphoid follicles where they are captured by antigen-presenting dendritic cells to elicit a mucosal immune response. The protein is Pancreatic secretory granule membrane major glycoprotein GP2 of Homo sapiens (Human).